The following is a 521-amino-acid chain: Vang-like protein 2-B (521 aa).

Over residues Met1–Arg18 the composition is skewed to low complexity. Positions Met1–Thr73 are disordered. The Cytoplasmic segment spans residues Met1 to Gly108. A compositionally biased stretch (basic residues) spans Ser19 to Lys33. Basic and acidic residues predominate over residues Glu57–Asn67. Residues Val109–Leu129 traverse the membrane as a helical segment. Over Pro130–Gly147 the chain is Extracellular. Residues Leu148 to Phe168 form a helical membrane-spanning segment. Residues Arg169 to Val178 are Cytoplasmic-facing. Residues Phe179–Phe199 form a helical membrane-spanning segment. The Extracellular portion of the chain corresponds to Tyr200–Tyr218. The chain crosses the membrane as a helical span at residues Ala219–Leu239. At Arg240–Val521 the chain is on the cytoplasmic side. The short motif at Glu518–Val521 is the PDZ-binding element.

Belongs to the Vang family. As to quaternary structure, interacts with dvl/dsh. Interacts with prickle3. During gastrulation, broadly expressed in the dorsal region in both mesodermal and neural tissues. From the neurula stages, expressed throughout the neural tube. In tailbud stages, expression declines in the anterior notochord but remains strong in the posterior notochord and in the neural tube. Also weakly expressed in the prenephritic region of late tailbud embryos.

It is found in the cell membrane. Its function is as follows. Has a role in non-canonical Wnt/planar cell polarity (PCP) signaling; can recruit dvl/dsh and prickle from the cytoplasm to the plasma membrane. Acts in a PCP complex to regulate the polarized assembly of fibronectrin on the surface of the mesoderm during gastrulation. Regulates convergent extension in both dorsal mesoderm and neural tissue without affecting cell fate. Regulates neural fold closure during neurulation. May be required for cell surface localization of fzd3 and fzd6 in the inner ear. This Xenopus laevis (African clawed frog) protein is Vang-like protein 2-B (vangl2-b).